We begin with the raw amino-acid sequence, 882 residues long: DNA mismatch repair protein MutS (882 aa).

656-663 (GPNASGKS) provides a ligand contact to ATP.

The protein belongs to the DNA mismatch repair MutS family.

Its function is as follows. This protein is involved in the repair of mismatches in DNA. It is possible that it carries out the mismatch recognition step. This protein has a weak ATPase activity. The protein is DNA mismatch repair protein MutS of Synechococcus elongatus (strain ATCC 33912 / PCC 7942 / FACHB-805) (Anacystis nidulans R2).